The following is a 136-amino-acid chain: Large ribosomal subunit protein uL16c (136 aa).

The protein belongs to the universal ribosomal protein uL16 family. Part of the 50S ribosomal subunit.

Its subcellular location is the plastid. The protein localises to the chloroplast. This is Large ribosomal subunit protein uL16c from Zea mays (Maize).